The sequence spans 325 residues: Elongation factor P--(R)-beta-lysine ligase (325 aa).

76–78 provides a ligand contact to substrate; the sequence is SPE. ATP contacts are provided by residues 100–102 and asparagine 109; that span reads RNE. Substrate is bound at residue tyrosine 118. 244–245 serves as a coordination point for ATP; the sequence is EL. Glutamate 251 provides a ligand contact to substrate. Glycine 300 provides a ligand contact to ATP.

Belongs to the class-II aminoacyl-tRNA synthetase family. EpmA subfamily. Homodimer.

It carries out the reaction D-beta-lysine + L-lysyl-[protein] + ATP = N(6)-((3R)-3,6-diaminohexanoyl)-L-lysyl-[protein] + AMP + diphosphate + H(+). With EpmB is involved in the beta-lysylation step of the post-translational modification of translation elongation factor P (EF-P). Catalyzes the ATP-dependent activation of (R)-beta-lysine produced by EpmB, forming a lysyl-adenylate, from which the beta-lysyl moiety is then transferred to the epsilon-amino group of a conserved specific lysine residue in EF-P. The polypeptide is Elongation factor P--(R)-beta-lysine ligase (Proteus mirabilis (strain HI4320)).